The chain runs to 373 residues: Probable jasmonic acid carboxyl methyltransferase 2 (373 aa).

Position 18 (Y18) interacts with S-adenosyl-L-homocysteine. Q25 provides a ligand contact to jasmonate. S-adenosyl-L-homocysteine is bound by residues C59, N64, D96, L97, S135, and F136. H156 and W157 together coordinate jasmonate. Mg(2+) is bound by residues N174, D260, F262, and N263.

Belongs to the methyltransferase superfamily. Type-7 methyltransferase family. Mg(2+) is required as a cofactor.

The protein resides in the cytoplasm. The protein localises to the nucleus. It carries out the reaction jasmonate + S-adenosyl-L-methionine = methyl (-)-jasmonate + S-adenosyl-L-homocysteine. The protein operates within lipid metabolism; oxylipin biosynthesis. Its function is as follows. Catalyzes the methylation of jasmonate into methyljasmonate, a plant volatile that acts as an important cellular regulator mediating diverse developmental processes and defense responses. The protein is Probable jasmonic acid carboxyl methyltransferase 2 of Theobroma cacao (Cacao).